A 366-amino-acid polypeptide reads, in one-letter code: cAMP-dependent protein kinase regulatory subunit (366 aa).

The dimerization and phosphorylation stretch occupies residues 1–121 (MSGGNEEDQL…SLESAMRKNL (121 aa)). Residues 55-87 (QRAQEGGNPDAADDDDIIVEPPKRSGGRRTGIS) form a disordered region. The Pseudophosphorylation motif motif lies at 82-86 (RRTGI). The residue at position 87 (Ser87) is a Phosphoserine. 3',5'-cyclic AMP is bound by residues 122-239 (LFAH…SKVQ), Glu187, Arg196, 240-366 (ILAD…KLMT), Glu311, and Arg320.

This sequence belongs to the cAMP-dependent kinase regulatory chain family. As to quaternary structure, tetramer, composed of 2 regulatory (R) and 2 catalytic (C) subunits. In the presence of cAMP it dissociates into 2 active monomeric C subunits and an R dimer that binds four cAMP molecules. In terms of processing, the pseudophosphorylation site binds to the substrate-binding region of the catalytic chain but is not phosphorylated. The physiological significance of phosphorylations by other kinases is unclear.

Its subcellular location is the cytoplasm. It is found in the cytosol. In terms of biological role, controls the rhythmic contraction of enteric muscles probably by regulating G-protein coupled receptor aex-2-mediated calcium influx in GABAergic DVB neurons. The sequence is that of cAMP-dependent protein kinase regulatory subunit (kin-2) from Caenorhabditis elegans.